Here is a 597-residue protein sequence, read N- to C-terminus: Formate--tetrahydrofolate ligase (597 aa).

Thr84 to Ser91 serves as a coordination point for ATP.

The protein belongs to the formate--tetrahydrofolate ligase family.

The enzyme catalyses (6S)-5,6,7,8-tetrahydrofolate + formate + ATP = (6R)-10-formyltetrahydrofolate + ADP + phosphate. It functions in the pathway one-carbon metabolism; tetrahydrofolate interconversion. The polypeptide is Formate--tetrahydrofolate ligase (Dehalococcoides mccartyi (strain CBDB1)).